The following is a 177-amino-acid chain: Alkyl hydroperoxide reductase AhpD (177 aa).

Residue C130 is the Proton donor of the active site. A disulfide bridge connects residues C130 and C133. C133 acts as the Cysteine sulfenic acid (-SOH) intermediate in catalysis.

The protein belongs to the AhpD family. Homotrimer.

It carries out the reaction N(6)-[(R)-dihydrolipoyl]-L-lysyl-[lipoyl-carrier protein] + a hydroperoxide = N(6)-[(R)-lipoyl]-L-lysyl-[lipoyl-carrier protein] + an alcohol + H2O. In terms of biological role, antioxidant protein with alkyl hydroperoxidase activity. Required for the reduction of the AhpC active site cysteine residues and for the regeneration of the AhpC enzyme activity. In Mycolicibacterium smegmatis (strain ATCC 700084 / mc(2)155) (Mycobacterium smegmatis), this protein is Alkyl hydroperoxide reductase AhpD.